A 439-amino-acid polypeptide reads, in one-letter code: ATP-dependent protease ATPase subunit HslU (439 aa).

Residues Ile-17, 59-64 (GVGKTE), Asp-251, Glu-317, and Arg-389 each bind ATP.

This sequence belongs to the ClpX chaperone family. HslU subfamily. In terms of assembly, a double ring-shaped homohexamer of HslV is capped on each side by a ring-shaped HslU homohexamer. The assembly of the HslU/HslV complex is dependent on binding of ATP.

The protein resides in the cytoplasm. In terms of biological role, ATPase subunit of a proteasome-like degradation complex; this subunit has chaperone activity. The binding of ATP and its subsequent hydrolysis by HslU are essential for unfolding of protein substrates subsequently hydrolyzed by HslV. HslU recognizes the N-terminal part of its protein substrates and unfolds these before they are guided to HslV for hydrolysis. This chain is ATP-dependent protease ATPase subunit HslU, found in Campylobacter jejuni subsp. jejuni serotype O:6 (strain 81116 / NCTC 11828).